Reading from the N-terminus, the 514-residue chain is ATP synthase subunit alpha 2 (514 aa).

170 to 177 lines the ATP pocket; that stretch reads GDRQTGKT.

It belongs to the ATPase alpha/beta chains family. In terms of assembly, F-type ATPases have 2 components, CF(1) - the catalytic core - and CF(0) - the membrane proton channel. CF(1) has five subunits: alpha(3), beta(3), gamma(1), delta(1), epsilon(1). CF(0) has three main subunits: a(1), b(2) and c(9-12). The alpha and beta chains form an alternating ring which encloses part of the gamma chain. CF(1) is attached to CF(0) by a central stalk formed by the gamma and epsilon chains, while a peripheral stalk is formed by the delta and b chains.

The protein resides in the cell inner membrane. The catalysed reaction is ATP + H2O + 4 H(+)(in) = ADP + phosphate + 5 H(+)(out). Its function is as follows. Produces ATP from ADP in the presence of a proton gradient across the membrane. The alpha chain is a regulatory subunit. The polypeptide is ATP synthase subunit alpha 2 (Hahella chejuensis (strain KCTC 2396)).